Reading from the N-terminus, the 228-residue chain is MNLKETELCLGLPGGTETVESPAKSGVGNKRGFSETVDLKLNLQSNKQGHVDLNTNGAPKEKTFLKDPSKPPAKAQVVGWPPVRNYRKNVMANQKSGEAEEAMSSGGGTVAFVKVSMDGAPYLRKVDLKMYTSYKDLSDALAKMFSSFTMGSYGAQGMIDFMNESKVMDLLNSSEYVPSYEDKDGDWMLVGDVPWPMFVESCKRLRIMKGSEAIGLAPRAMEKFKNRS.

The EAR-like (transcriptional repression) signature appears at 8–12 (LCLGL). The 101-residue stretch at 110-210 (VAFVKVSMDG…SCKRLRIMKG (101 aa)) folds into the PB1 domain.

This sequence belongs to the Aux/IAA family. In terms of assembly, homodimers and heterodimers. Interacts with TPL. As to expression, preferentially expressed in roots and flowers.

The protein resides in the nucleus. Functionally, aux/IAA proteins are short-lived transcriptional factors that function as repressors of early auxin response genes at low auxin concentrations. Repression is thought to result from the interaction with auxin response factors (ARFs), proteins that bind to the auxin-responsive promoter element (AuxRE). Formation of heterodimers with ARF proteins may alter their ability to modulate early auxin response genes expression. The protein is Auxin-responsive protein IAA14 (IAA14) of Arabidopsis thaliana (Mouse-ear cress).